Reading from the N-terminus, the 291-residue chain is MAVGKEILTKIRSVQNTQKITKAMQMVSTSKMRKTQERMRLARPYAEKVRMVMSHLAQTNTDHGIPLLESHREIRRVGFILITSDKGLCGGLNANVLKKFLAQVQEYRNQGIEEEIVCLGSKGLMACQSIGLNVVASAVNLGDTPKMEMLLGPLTELFQRYEKHEIDKIHLVYSGFVNTMRQEPRMEVLLPIGENVIGDSAPKPPFSWEYRYEPTALAVLEYLVRRYLESVVYQALSDNMASEQAARMVAMKAATDNAGNAIKELRLVYNKSRQAAITTELSEIVAGAAAV.

The protein belongs to the ATPase gamma chain family. In terms of assembly, F-type ATPases have 2 components, CF(1) - the catalytic core - and CF(0) - the membrane proton channel. CF(1) has five subunits: alpha(3), beta(3), gamma(1), delta(1), epsilon(1). CF(0) has three main subunits: a, b and c.

The protein localises to the cell inner membrane. Functionally, produces ATP from ADP in the presence of a proton gradient across the membrane. The gamma chain is believed to be important in regulating ATPase activity and the flow of protons through the CF(0) complex. The chain is ATP synthase gamma chain from Neisseria gonorrhoeae (strain NCCP11945).